A 243-amino-acid chain; its full sequence is Urease accessory protein UreF 2 (243 aa).

Belongs to the UreF family. UreD, UreF and UreG form a complex that acts as a GTP-hydrolysis-dependent molecular chaperone, activating the urease apoprotein by helping to assemble the nickel containing metallocenter of UreC. The UreE protein probably delivers the nickel.

Its subcellular location is the cytoplasm. Functionally, required for maturation of urease via the functional incorporation of the urease nickel metallocenter. Disrupting the ure2 operon has no effect on urease activity or pathogen survival in BALB/c mice when administered orally. The polypeptide is Urease accessory protein UreF 2 (Brucella abortus (strain 2308)).